A 120-amino-acid polypeptide reads, in one-letter code: Large ribosomal subunit protein uL18 (120 aa).

The protein belongs to the universal ribosomal protein uL18 family. Part of the 50S ribosomal subunit; part of the 5S rRNA/L5/L18/L25 subcomplex. Contacts the 5S and 23S rRNAs.

Its function is as follows. This is one of the proteins that bind and probably mediate the attachment of the 5S RNA into the large ribosomal subunit, where it forms part of the central protuberance. The polypeptide is Large ribosomal subunit protein uL18 (Rhizobium leguminosarum bv. trifolii (strain WSM2304)).